The sequence spans 395 residues: Probable eukaryotic translation initiation factor 5 (395 aa).

Position 28 to 35 (28 to 35 (GKGNGIKT)) interacts with GTP. 2 disordered regions span residues 146–171 (PPAKKKSHKHKRDSPVAEEEDGAEDE) and 374–395 (LAEASDESESEDEEEEEEDDDE). Residues 147–157 (PAKKKSHKHKR) show a composition bias toward basic residues. Acidic residues-rich tracts occupy residues 161–170 (VAEEEDGAED) and 377–395 (ASDESESEDEEEEEEDDDE). The 157-residue stretch at 228–384 (EEAESSRYDQ…AEASDESESE (157 aa)) folds into the W2 domain.

It belongs to the eIF-2-beta/eIF-5 family. Monomer.

Its function is as follows. Catalyzes the hydrolysis of GTP bound to the 40S ribosomal initiation complex (40S.mRNA.Met-tRNA[F].eIF-2.GTP) with the subsequent joining of a 60S ribosomal subunit resulting in the release of eIF-2 and the guanine nucleotide. The subsequent joining of a 60S ribosomal subunit results in the formation of a functional 80S initiation complex (80S.mRNA.Met-tRNA[F]). This is Probable eukaryotic translation initiation factor 5 (tif5) from Schizosaccharomyces pombe (strain 972 / ATCC 24843) (Fission yeast).